Reading from the N-terminus, the 501-residue chain is Carotenoid cleavage oxygenase (501 aa).

Positions 162, 211, 314, and 494 each coordinate Fe cation.

Belongs to the carotenoid oxygenase family. It depends on Fe(2+) as a cofactor.

Catalyzes the oxidative cleavage of several carotenoids and apocarotenoids in vitro. This chain is Carotenoid cleavage oxygenase, found in Mycobacterium tuberculosis (strain CDC 1551 / Oshkosh).